The following is a 110-amino-acid chain: Period circadian protein (110 aa).

Positions 23-97 (VTNTSIAGTG…GGAGGGGGVT (75 aa)) are disordered. 12 tandem repeats follow at residues 30–31 (GT), 33–34 (GT), 36–37 (GT), 38–39 (GT), 40–41 (GT), 42–43 (GT), 44–45 (GT), 46–47 (GT), 48–49 (GT), 50–51 (GT), 52–53 (GT), and 54–55 (GT). Residues 30-63 (GTGGTGGTGTGTGTGTGTGTGTGTGTDTGTGTGT) are compositionally biased toward gly residues. The interval 30-79 (GTGGTGGTGTGTGTGTGTGTGTGTGTDTGTGTGTRNGTNSGTNSGTRTGT) is 24 X 2 AA approximate tandem repeats of G-T. The 13; approximate repeat unit spans residues 56 to 57 (DT). A run of 3 repeats spans residues 58–59 (GT), 60–61 (GT), and 62–63 (GT). A 17; approximate repeat occupies 64–65 (RN). Residues 64–83 (RNGTNSGTNSGTRTGTASSY) are compositionally biased toward low complexity. Residues 66–67 (GT) form repeat 18. The stretch at 68–69 (NS) is one 19; approximate repeat. Residues 70–71 (GT) form repeat 20. The 21; approximate repeat unit spans residues 72–73 (NS). The stretch at 74–75 (GT) is repeat 22. The stretch at 76–77 (RT) is one 23; approximate repeat. Repeat 24 spans residues 78–79 (GT). Positions 84-96 (RGGGGGAGGGGGV) are enriched in gly residues.

As to quaternary structure, forms a heterodimer with timeless (TIM); the complex then translocates into the nucleus. Post-translationally, phosphorylated with a circadian rhythmicity, probably by the double-time protein (dbt). Phosphorylation could be implicated in the stability of per monomer and in the formation of heterodimer per-tim.

It localises to the nucleus. Its subcellular location is the cytoplasm. The protein localises to the perinuclear region. Its function is as follows. Essential for biological clock functions. Determines the period length of circadian and ultradian rhythms; an increase in PER dosage leads to shortened circadian rhythms and a decrease leads to lengthened circadian rhythms. Essential for the circadian rhythmicity of locomotor activity, eclosion behavior, and for the rhythmic component of the male courtship song that originates in the thoracic nervous system. The biological cycle depends on the rhythmic formation and nuclear localization of the TIM-PER complex. Light induces the degradation of TIM, which promotes elimination of PER. Nuclear activity of the heterodimer coordinatively regulates PER and TIM transcription through a negative feedback loop. Behaves as a negative element in circadian transcriptional loop. Does not appear to bind DNA, suggesting indirect transcriptional inhibition. In Drosophila erecta (Fruit fly), this protein is Period circadian protein (per).